Reading from the N-terminus, the 237-residue chain is tRNA (guanine-N(7)-)-methyltransferase (237 aa).

S-adenosyl-L-methionine is bound by residues aspartate 35, glutamate 60, asparagine 87, and aspartate 113. Aspartate 113 is a catalytic residue. Residues lysine 117 and aspartate 149 each coordinate substrate.

It belongs to the class I-like SAM-binding methyltransferase superfamily. TrmB family.

The enzyme catalyses guanosine(46) in tRNA + S-adenosyl-L-methionine = N(7)-methylguanosine(46) in tRNA + S-adenosyl-L-homocysteine. The protein operates within tRNA modification; N(7)-methylguanine-tRNA biosynthesis. In terms of biological role, catalyzes the formation of N(7)-methylguanine at position 46 (m7G46) in tRNA. The sequence is that of tRNA (guanine-N(7)-)-methyltransferase from Synechococcus sp. (strain CC9311).